We begin with the raw amino-acid sequence, 433 residues long: Probable dipeptidase (433 aa).

Cysteine 20 is an active-site residue.

The protein belongs to the peptidase C69 family.

The enzyme catalyses an L-aminoacyl-L-amino acid + H2O = 2 an L-alpha-amino acid. The protein is Probable dipeptidase (pipD) of Salmonella dublin.